The sequence spans 922 residues: MTETPTDGGSTPPSDGGGPGGRIEPVELQTSMQRAYIDYAMAVIVGRALPDVRDGLKPVHRRVLYAMYDGGYRPDRGFSKCSRVVGDVMGQYHPHGDTAIYDTLVRLAQPWVMRAPLIHGQGNFGSPGNDSAAAMRYTECRMAPLAMEMVRDINEDTVDFQPNYDGRSQEPVVLPARFPNLLVNGSAGIAVGMATNIPPHNLREVAEGARWALEHPDATREELQDALIERIKGPDFPNGALIVGRQGIEQAYRTGRGSITQRAVIEVDEDAKGRTNLVITELPYMVNPDNLALKIAELADSGKVQGISDVRDDTSDRTGQRLVVVLKRDAVARVVLNNLLKHTELQTNFSANMLALVDGVPRTLAIDQFISNWVTHQIDVIRRRTEYRLAEAEKRAHVLRGLVKALDMLDEVIALIRRSPDVAEAREGLIALLDIDEVQATAILDMQLRQLAALQRQKIIDDLAEIEARIADLKDILANVARQRQIVADELAEIVERYGDDRRSQIIAADGDLSMEDLIPDEELVVSITRGGYAKRTRADQYRTQRRGGKGVRGATLRGDDVVEHFIATTNHHWLLFFTTAGRVYRTKAYNLPEASRDAKGGHVAGLLSFQPDENIAQVLAIRDYDQAPYLVLATRDGLVKKTRLGDYNSPRQAGVIAINFRSEDDELIGAELVNPEDHILLVSRKGQSVRFQADDSQLRPMGRATGGVTGMKFRDGDSLLSMSVIRAAQVEAEEAAEASGESVEEMAETRGQWFGLHPQYVFTITDGGFAKRTQIPEYRVQSRGGIGIRAMKLANEDRGELVGAFIVEDGDEILSITSGGQVVRSPIDENFRPTGRSTMGVKFVTPKKGDSVAVVARSVEANGDDELDELDESALDEGGAEGGEVDESADAGTDATIDGSAASDVARTEGDTEPDPGESDG.

Residues 1–14 (MTETPTDGGSTPPS) are compositionally biased toward low complexity. The tract at residues 1 to 24 (MTETPTDGGSTPPSDGGGPGGRIE) is disordered. A Topo IIA-type catalytic domain is found at 49–518 (LPDVRDGLKP…ADGDLSMEDL (470 aa)). Catalysis depends on tyrosine 137, which acts as the O-(5'-phospho-DNA)-tyrosine intermediate. The short motif at 545–551 (QRRGGKG) is the GyrA-box element. The interval 861–922 (EANGDDELDE…TEPDPGESDG (62 aa)) is disordered. Acidic residues-rich tracts occupy residues 863 to 890 (NGDD…DESA) and 912 to 922 (DTEPDPGESDG).

The protein belongs to the type II topoisomerase GyrA/ParC subunit family. Heterotetramer, composed of two GyrA and two GyrB chains. In the heterotetramer, GyrA contains the active site tyrosine that forms a transient covalent intermediate with DNA, while GyrB binds cofactors and catalyzes ATP hydrolysis.

Its subcellular location is the cytoplasm. It carries out the reaction ATP-dependent breakage, passage and rejoining of double-stranded DNA.. In terms of biological role, a type II topoisomerase that negatively supercoils closed circular double-stranded (ds) DNA in an ATP-dependent manner to modulate DNA topology and maintain chromosomes in an underwound state. Negative supercoiling favors strand separation, and DNA replication, transcription, recombination and repair, all of which involve strand separation. Also able to catalyze the interconversion of other topological isomers of dsDNA rings, including catenanes and knotted rings. Type II topoisomerases break and join 2 DNA strands simultaneously in an ATP-dependent manner. The sequence is that of DNA gyrase subunit A from Nocardioides sp. (strain ATCC BAA-499 / JS614).